Consider the following 798-residue polypeptide: MWTSGRMSNAKNLFGLGVSLYFWGLMDLTTTVLSGSARPLTEGPEDNLSDKLHQRMKRSWVWNQFFVLEEYTGTDPLYVGKLHSDMDRGDGSIKYILSGEGAGIVFTIDDTTGDIHAIQRLDREERSQYTLRAQALDRRTGRPMEPESEFIIKIQDINDNEPKFLDGPYVASVPEMSPVGTSVIQVTATDADDPTYGNSARVVYSILQGQPYFSVDSRTGLIRTALMNMDREAKEYYEVIVQAKDMGGQLGGLAGTTTVNITLSDVNDNPPRFPQKHYQMSVLESAPVSSTVGRVVAKDLDEGINAEMKYSLVDGDGLDVFDINTDPNYQVGIITVRKPLSFESKKSYTLKVEGANPHLEMRFLNLGPFRDTTTVHISVEDVDEPPVFEPSFYFVEVPEDVEIGATIQIISAKDPDVTNNSIRYSIDRSSDPGRFFYVDITSGALMTARPLDREDVSWHNITVLAMELNNPSQVGSVSVTVKVLDVNDNAPEFARFYEAFVCENAKAGQLIQTVSAIDRDDPQEGQHFYYSLAPEAANNPNFTLRDNQDNTAWILTRRSGFRQHEQNIFYLPILISDNGRPVLSSTGTLTVHVCSCDEGGMVMSCNAEAYVLPVSLSRGALIAILACIFVLLVLVLLILSMRRQRKQPYIIDEEENIHENIVRYDDEGGGEEDTEAFDIAAMWNPREAQLVVKNRQDMLPEIESLSRYVPQACIMDNNVHNYVLAKLYEADMDLWAPPFDSLQTYMFEGNGSVAESLSSLQSVTTDSDQSYDYLTDWGPRFKKLAEMYGATDSSGALW.

Residues 1 to 35 (MWTSGRMSNAKNLFGLGVSLYFWGLMDLTTTVLSG) form the signal peptide. A propeptide spanning residues 36-58 (SARPLTEGPEDNLSDKLHQRMKR) is cleaved from the precursor. A glycan (N-linked (GlcNAc...) asparagine) is linked at asparagine 47. Over 59–618 (SWVWNQFFVL…AYVLPVSLSR (560 aa)) the chain is Extracellular. Cadherin domains follow at residues 60-164 (WVWN…EPKF), 165-273 (LDGP…PPRF), 274-392 (PQKH…EPSF), 389-493 (EPSF…APEF), and 493-615 (FARF…LPVS). The short motif at 88–90 (RGD) is the Cell attachment site element. An N-linked (GlcNAc...) asparagine glycan is attached at asparagine 260. Residues asparagine 419, asparagine 460, and asparagine 541 are each glycosylated (N-linked (GlcNAc...) asparagine). Residues 619–639 (GALIAILACIFVLLVLVLLIL) traverse the membrane as a helical segment. Residues 640 to 798 (SMRRQRKQPY…GATDSSGALW (159 aa)) are Cytoplasmic-facing.

As to expression, detected in embryonic spinal cord, in the brachial and lumbar section of motor neurons (at protein level). Detected in ventro-lateral portion of embryonic spinal cord, in the brachial and lumbar section of embryonic motor neurons. Detected in embryonic adductor motor neurons and embryonic dorsal root ganglion. Detected in the caudal half of newly generated somites and in presomitic mesoderm.

It is found in the cell membrane. In terms of biological role, cadherins are calcium-dependent cell adhesion proteins. They preferentially interact with themselves in a homophilic manner in connecting cells; cadherins may thus contribute to the sorting of heterogeneous cell types. This chain is Cadherin-20 (CDH20), found in Gallus gallus (Chicken).